The following is a 231-amino-acid chain: Orotidine 5'-phosphate decarboxylase (231 aa).

Substrate-binding positions include Asp11, Lys34, 61–70, Thr117, Arg179, Gln188, Gly208, and Arg209; that span reads DLKLHDIPNT. Lys63 functions as the Proton donor in the catalytic mechanism.

It belongs to the OMP decarboxylase family. Type 1 subfamily. Homodimer.

It catalyses the reaction orotidine 5'-phosphate + H(+) = UMP + CO2. It participates in pyrimidine metabolism; UMP biosynthesis via de novo pathway; UMP from orotate: step 2/2. Its function is as follows. Catalyzes the decarboxylation of orotidine 5'-monophosphate (OMP) to uridine 5'-monophosphate (UMP). The sequence is that of Orotidine 5'-phosphate decarboxylase from Streptococcus thermophilus (strain CNRZ 1066).